The following is a 387-amino-acid chain: Eukaryotic translation initiation factor 3 subunit M (387 aa).

The PCI domain occupies 181-340; it reads LSSKVMIELL…RKVHISSTMH (160 aa).

It belongs to the eIF-3 subunit M family. Component of the eukaryotic translation initiation factor 3 (eIF-3) complex. The eIF-3 complex interacts with pix.

It is found in the cytoplasm. The protein resides in the golgi apparatus. Functionally, component of the eukaryotic translation initiation factor 3 (eIF-3) complex, which is involved in protein synthesis of a specialized repertoire of mRNAs and, together with other initiation factors, stimulates binding of mRNA and methionyl-tRNAi to the 40S ribosome. The eIF-3 complex specifically targets and initiates translation of a subset of mRNAs involved in cell proliferation. In Drosophila mojavensis (Fruit fly), this protein is Eukaryotic translation initiation factor 3 subunit M.